We begin with the raw amino-acid sequence, 80 residues long: Serine palmitoyltransferase small subunit A (80 aa).

At 1–21 (MKVSCEDINGPRSSLSRAWNH) the chain is on the cytoplasmic side. The helical transmembrane segment at 22 to 38 (MSWLYYQYLLVTALYML) threads the bilayer. Residues 39 to 43 (EPWER) are Lumenal-facing. A helical transmembrane segment spans residues 44-66 (TIFNSMLVSIVGMALYTGYIFMP). Residues 67 to 80 (QHILAILHYFEIVQ) are Cytoplasmic-facing.

The protein belongs to the SPTSS family. SPTSSA subfamily. As to quaternary structure, component of the serine palmitoyltransferase (SPT) complex, which is composed of SPTLC1, SPTLC2 or SPTLC3 and SPTSSA or SPTSSB. The heterodimer consisting of SPTLC1 and SPTLC2/SPTLC3 forms the catalytic core of the enzyme, while SPTSSA or SPTSSB subunits determine substrate specificity. SPT also interacts with ORMDL proteins, especially ORMDL3, which negatively regulate SPT activity in the presence of ceramides.

The protein localises to the endoplasmic reticulum membrane. It participates in lipid metabolism; sphingolipid metabolism. Its function is as follows. Component of the serine palmitoyltransferase multisubunit enzyme (SPT) that catalyzes the initial and rate-limiting step in sphingolipid biosynthesis by condensing L-serine and activated acyl-CoA (most commonly palmitoyl-CoA) to form long-chain bases. The SPT complex is composed of SPTLC1, SPTLC2 or SPTLC3 and SPTSSA or SPTSSB. Within this complex, the heterodimer consisting of SPTLC1 and SPTLC2/SPTLC3 forms the catalytic core. Within the SPT complex, SPTSSA stimulates the catalytic activity and plays a role in substrate specificity, which depends upon the overall complex composition. The SPTLC1-SPTLC2-SPTSSA complex shows a strong preference for C16-CoA substrate, while the SPTLC1-SPTLC3-SPTSSA isozyme uses both C14-CoA and C16-CoA as substrates, with a slight preference for C14-CoA. Independently of its action as a SPT component, may be involved in MBOAT7 localization to mitochondria-associated membranes, a membrane bridge between the endoplasmic reticulum and mitochondria, may hence affect MBOAT7-catalyzed incorporation of arachidonic acid into phosphatidylinositol. This Xenopus tropicalis (Western clawed frog) protein is Serine palmitoyltransferase small subunit A (sptssa).